Reading from the N-terminus, the 189-residue chain is Nuclear distribution protein nudE homolog 1 (189 aa).

Residues asparagine 4–serine 121 are a coiled coil. Over residues valine 114–arginine 126 the composition is skewed to basic and acidic residues. The interval valine 114–lysine 139 is disordered.

Belongs to the nudE family. In terms of assembly, self-associates. Interacts with PAC1.

The protein resides in the nucleus. It localises to the cytoplasm. It is found in the cytoskeleton. Required for nuclear migration to the bud neck during cell division. Targets cytoplasmic dynein to microtubule plus ends thereby promoting dynein-mediated microtubule sliding along the bud cortex and consequently the movement of the mitotic spindle to the bud neck. The chain is Nuclear distribution protein nudE homolog 1 (NDL1) from Saccharomyces cerevisiae (strain ATCC 204508 / S288c) (Baker's yeast).